We begin with the raw amino-acid sequence, 211 residues long: N-(5'-phosphoribosyl)anthranilate isomerase (211 aa).

The protein belongs to the TrpF family.

The enzyme catalyses N-(5-phospho-beta-D-ribosyl)anthranilate = 1-(2-carboxyphenylamino)-1-deoxy-D-ribulose 5-phosphate. Its pathway is amino-acid biosynthesis; L-tryptophan biosynthesis; L-tryptophan from chorismate: step 3/5. This chain is N-(5'-phosphoribosyl)anthranilate isomerase, found in Nitrosomonas europaea (strain ATCC 19718 / CIP 103999 / KCTC 2705 / NBRC 14298).